A 154-amino-acid polypeptide reads, in one-letter code: 6,7-dimethyl-8-ribityllumazine synthase (154 aa).

Residues Trp-22, 56 to 58, and 80 to 82 each bind 5-amino-6-(D-ribitylamino)uracil; these read AWE and CVI. A (2S)-2-hydroxy-3-oxobutyl phosphate-binding site is contributed by 85 to 86; sequence DT. Residue His-88 is the Proton donor of the active site. Asn-113 contacts 5-amino-6-(D-ribitylamino)uracil. Position 127 (Arg-127) interacts with (2S)-2-hydroxy-3-oxobutyl phosphate.

This sequence belongs to the DMRL synthase family. As to quaternary structure, forms an icosahedral capsid composed of 60 subunits, arranged as a dodecamer of pentamers.

The catalysed reaction is (2S)-2-hydroxy-3-oxobutyl phosphate + 5-amino-6-(D-ribitylamino)uracil = 6,7-dimethyl-8-(1-D-ribityl)lumazine + phosphate + 2 H2O + H(+). It participates in cofactor biosynthesis; riboflavin biosynthesis; riboflavin from 2-hydroxy-3-oxobutyl phosphate and 5-amino-6-(D-ribitylamino)uracil: step 1/2. Catalyzes the formation of 6,7-dimethyl-8-ribityllumazine by condensation of 5-amino-6-(D-ribitylamino)uracil with 3,4-dihydroxy-2-butanone 4-phosphate. This is the penultimate step in the biosynthesis of riboflavin. In Xanthomonas campestris pv. campestris (strain 8004), this protein is 6,7-dimethyl-8-ribityllumazine synthase.